The sequence spans 302 residues: Ethylmalonyl-CoA decarboxylase (302 aa).

Belongs to the enoyl-CoA hydratase/isomerase family.

It localises to the cytoplasm. Its subcellular location is the cytosol. The enzyme catalyses (2S)-ethylmalonyl-CoA + H(+) = butanoyl-CoA + CO2. It catalyses the reaction (S)-methylmalonyl-CoA + H(+) = propanoyl-CoA + CO2. It carries out the reaction (2R)-ethylmalonyl-CoA + H(+) = butanoyl-CoA + CO2. Functionally, decarboxylates ethylmalonyl-CoA, a potentially toxic metabolite, to form butyryl-CoA, suggesting it might be involved in metabolite proofreading. Acts preferentially on (S)-ethylmalonyl-CoA but also has some activity on the (R)-isomer. Also has methylmalonyl-CoA decarboxylase activity at lower level. The sequence is that of Ethylmalonyl-CoA decarboxylase (echdc1) from Danio rerio (Zebrafish).